A 594-amino-acid polypeptide reads, in one-letter code: Estrogen receptor (594 aa).

The segment at 1–184 (MTMTLHTKAS…AMESAKETRY (184 aa)) is modulating (transactivation AF-1); mediates interaction with MACROD1. An O-linked (GlcNAc) serine glycan is attached at Ser-10. The tract at residues 35 to 47 (LERPLGEVYVESS) is required for interaction with NCOA1. The interval 35–174 (LERPLGEVYV…LASSGDKGSM (140 aa)) is interaction with DDX5; self-association. Phosphoserine; by CDK2 is present on residues Ser-104 and Ser-106. Ser-118 is modified (phosphoserine). A disordered region spans residues 152 to 173 (PNADNRRQGGRERLASSGDKGS). Basic and acidic residues predominate over residues 154-165 (ADNRRQGGRERL). A Phosphoserine; by CK2 modification is found at Ser-167. 2 NR C4-type zinc fingers span residues 185 to 205 (CAVC…CEGC) and 221 to 245 (CPAT…LRKC). Residues 185-250 (CAVCNDYASG…RLRKCYEVGM (66 aa)) constitute a DNA-binding region (nuclear receptor). The mediates interaction with DNTTIP2 stretch occupies residues 185 to 310 (CAVCNDYASG…TKKISPVLSL (126 aa)). Positions 251–310 (MKGGIRKDRRGGRMLKHKRQRDDGEGRNEAGPSGDRRPANFWPSPLLIKHTKKISPVLSL) are hinge. Basic residues predominate over residues 257 to 269 (KDRRGGRMLKHKR). Residues 257-293 (KDRRGGRMLKHKRQRDDGEGRNEAGPSGDRRPANFWP) are disordered. Arg-260 carries the post-translational modification Asymmetric dimethylarginine; by PRMT1. An interaction with AKAP13 region spans residues 262–594 (GRMLKHKRQR…GEAEGFPNTI (333 aa)). Residues 264–594 (MLKHKRQRDD…GEAEGFPNTI (331 aa)) form a self-association region. Over residues 270–288 (QRDDGEGRNEAGPSGDRRP) the composition is skewed to basic and acidic residues. The region spanning 311 to 546 (TAEQMISALL…DLLLEMLDAH (236 aa)) is the NR LBD domain. The segment at 311 to 594 (TAEQMISALL…GEAEGFPNTI (284 aa)) is transactivation AF-2. 17beta-estradiol contacts are provided by Glu-353 and Arg-394. Cys-447 carries S-palmitoyl cysteine lipidation. Position 523 (His-523) interacts with 17beta-estradiol. Position 536 is a phosphotyrosine; by Tyr-kinases (Tyr-536). A disordered region spans residues 551–575 (PANHGGAPMEETNQSQLATTGSTSP). Residues 561–575 (ETNQSQLATTGSTSP) show a composition bias toward polar residues. O-linked (GlcNAc) threonine glycosylation occurs at Thr-570.

It belongs to the nuclear hormone receptor family. NR3 subfamily. As to quaternary structure, binds DNA as a homodimer. Can form a heterodimer with ESR2. Interacts with coactivator NCOA5. Interacts with PELP1, the interaction is enhanced by 17-beta-estradiol; the interaction increases ESR1 transcriptional activity. Interacts with NCOA7; the interaction is ligand-inducible. Interacts with AKAP13, CUEDC2, HEXIM1, KDM5A, MAP1S, SMARD1, and UBE1C. Interacts with MUC1; the interaction is stimulated by 7 beta-estradiol (E2) and enhances ESR1-mediated transcription. Interacts with DNTTIP2, and UIMC1. Interacts with KMT2D/MLL2. Interacts with ATAD2; the interaction is enhanced by estradiol. Interacts with KIF18A and LDB1. Interacts with RLIM (via its C-terminus). Interacts with MACROD1. Interacts with SH2D4A and PLCG. Interacts with SH2D4A; the interaction blocks binding to PLCG and inhibits estrogen-induced cell proliferation. Interacts with DYNLL1. Interacts with CCDC62; the interaction requires estradiol and appears to enhance the transcription of target genes. Interacts with NR2C1; the interaction prevents homodimerization of ESR1 and suppresses its transcriptional activity and cell growth. Interacts with DNAAF4. Interacts with PRMT2. Interacts with RBFOX2. Interacts with EP300; the interaction is estrogen-dependent and enhanced by CITED1. Interacts with CITED1; the interaction is estrogen-dependent. Interacts with FAM120B, FOXL2, PHB2 and SLC30A9. Interacts with coactivators NCOA3 and NCOA6. Interacts with STK3/MST2 only in the presence of SAV1 and vice-versa. Binds to CSNK1D. Interacts with NCOA2; NCOA2 can interact with ESR1 AF-1 and AF-2 domains simultaneously and mediate their transcriptional synergy. Interacts with DDX5. Interacts with NCOA1; the interaction seems to require a self-association of N-terminal and C-terminal regions. Interacts with ZNF366, DDX17, NFKB1, RELA, SP1 and SP3. Interacts with NRIP1. Interacts with GPER1; the interaction occurs in an estrogen-dependent manner. Interacts with CLOCK and the interaction is stimulated by estrogen. Interacts with TRIP4 (ufmylated); estrogen dependent. Interacts with LMTK3; the interaction phosphorylates ESR1 (in vitro) and protects it against proteasomal degradation. Interacts with CCAR2 (via N-terminus) in a ligand-independent manner. Interacts with ZFHX3. Interacts with SFR1 in a ligand-dependent and -independent manner. Interacts with DCAF13, LATS1 and DCAF1; regulates ESR1 ubiquitination and ubiquitin-mediated proteasomal degradation. Interacts (via DNA-binding domain) with POU4F2 (C-terminus); this interaction increases the estrogen receptor ESR1 transcriptional activity in a DNA- and ligand 17-beta-estradiol-independent manner. Interacts with ESRRB isoform 1. Interacts with UBE3A and WBP2. Interacts with GTF2B. Interacts with RBM39. In the absence of hormonal ligand, interacts with TACC1. Interacts with PI3KR1 or PI3KR2 and PTK2/FAK1. Interacts with SRC. Interacts with BAG1; the interaction is promoted in the absence of estradiol (17-beta-estradiol/E2). Interacts with and ubiquitinated by STUB1; the interaction is promoted in the absence of estradiol (17-beta-estradiol/E2). Interacts with NEDD8. Ubiquitinated; regulated by LATS1 via DCAF1 it leads to ESR1 proteasomal degradation. Deubiquitinated by OTUB1. Ubiquitinated by STUB1/CHIP; in the CA1 hippocampal region following loss of endogenous circulating estradiol (17-beta-estradiol/E2). Ubiquitinated by UBR5, leading to its degradation: UBR5 specifically recognizes and binds ligand-bound ESR1 when it is not associated with coactivators (NCOAs). In presence of NCOAs, the UBR5-degron is not accessible, preventing its ubiquitination and degradation. In terms of processing, phosphorylated by cyclin A/CDK2 and CK1. Phosphorylation probably enhances transcriptional activity. Dephosphorylation at Ser-118 by PPP5C inhibits its transactivation activity. Phosphorylated by LMTK3 (in vitro). Post-translationally, palmitoylated at Cys-447 by ZDHHC7 and ZDHHC21. Palmitoylation is required for plasma membrane targeting and for rapid intracellular signaling via ERK and AKT kinases and cAMP generation, but not for signaling mediated by the nuclear hormone receptor. Dimethylated by PRMT1 at Arg-260. The methylation may favor cytoplasmic localization. Demethylated by JMJD6 at Arg-260.

The protein resides in the nucleus. The protein localises to the cytoplasm. Its subcellular location is the golgi apparatus. It is found in the cell membrane. In terms of biological role, nuclear hormone receptor. The steroid hormones and their receptors are involved in the regulation of eukaryotic gene expression and affect cellular proliferation and differentiation in target tissues. Ligand-dependent nuclear transactivation involves either direct homodimer binding to a palindromic estrogen response element (ERE) sequence or association with other DNA-binding transcription factors, such as AP-1/c-Jun, c-Fos, ATF-2, Sp1 and Sp3, to mediate ERE-independent signaling. Ligand binding induces a conformational change allowing subsequent or combinatorial association with multiprotein coactivator complexes through LXXLL motifs of their respective components. Mutual transrepression occurs between the estrogen receptor (ER) and NF-kappa-B in a cell-type specific manner. Decreases NF-kappa-B DNA-binding activity and inhibits NF-kappa-B-mediated transcription from the IL6 promoter and displace RELA/p65 and associated coregulators from the promoter. Recruited to the NF-kappa-B response element of the CCL2 and IL8 promoters and can displace CREBBP. Present with NF-kappa-B components RELA/p65 and NFKB1/p50 on ERE sequences. Can also act synergistically with NF-kappa-B to activate transcription involving respective recruitment adjacent response elements; the function involves CREBBP. Can activate the transcriptional activity of TFF1. Also mediates membrane-initiated estrogen signaling involving various kinase cascades. Essential for MTA1-mediated transcriptional regulation of BRCA1 and BCAS3. Maintains neuronal survival in response to ischemic reperfusion injury when in the presence of circulating estradiol (17-beta-estradiol/E2). This is Estrogen receptor (ESR1) from Equus caballus (Horse).